Here is a 193-residue protein sequence, read N- to C-terminus: Cysteine and glycine-rich protein 1 (193 aa).

An LIM zinc-binding 1 domain is found at 10 to 61; sequence CGVCQKTVYFAEEVQCEGNSFHKSCFLCMVCKKNLDSTTVAVHGEEIYCKSC. The Nuclear localization signal signature appears at 64–69; that stretch reads KKYGPK. Position 81 is a phosphoserine (Ser-81). The residue at position 84 (Lys-84) is an N6-acetyllysine. A Glycyl lysine isopeptide (Lys-Gly) (interchain with G-Cter in SUMO2) cross-link involves residue Lys-91. N6-acetyllysine occurs at positions 112, 131, 137, and 161. Positions 119 to 170 constitute an LIM zinc-binding 2 domain; it reads CPRCSQAVYAAEKVIGAGKSWHKSCFRCAKCGKGLESTTLADKDGEIYCKGC. Ser-192 is subject to Phosphoserine.

Interacts with ASCC1; ASCC2 and TRIP4.

It localises to the nucleus. Its function is as follows. Could play a role in neuronal development. This chain is Cysteine and glycine-rich protein 1 (Csrp1), found in Mus musculus (Mouse).